The chain runs to 267 residues: Zein-alpha Z4 (267 aa).

The N-terminal stretch at 1 to 21 (MAAKIFCLIMLLGLSASAATA) is a signal peptide.

The protein belongs to the zein family.

In terms of biological role, zeins are major seed storage proteins. This Zea mays (Maize) protein is Zein-alpha Z4.